Reading from the N-terminus, the 268-residue chain is MSVSETIVLVGWGAIGKRVADLLAERKSSVRIGAVAVRDRSASRDRLPAGAVLIENPAELAASGASLVVEAAGRPSVLPWGEAALSTGMDFAVSSTSAFVDDALFQRLKDAAAASGAKLIIPPGALGGIDALSAASRLSIESVEHRIIKPAKAWAGTQAAQLVPLDEISEATVFFTDTARKAADAFPQNANVAVITSLAGIGLDRTRVTLVADPAARLNTHEIIAEGDFGRMHLRFENGPLATNPKSSEMTALNLVRAIENRVATTVI.

Ala125 and Asn191 together coordinate NAD(+). Residue His221 is part of the active site.

The protein belongs to the L-aspartate dehydrogenase family.

It catalyses the reaction L-aspartate + NADP(+) + H2O = oxaloacetate + NH4(+) + NADPH + H(+). The catalysed reaction is L-aspartate + NAD(+) + H2O = oxaloacetate + NH4(+) + NADH + H(+). The protein operates within cofactor biosynthesis; NAD(+) biosynthesis; iminoaspartate from L-aspartate (dehydrogenase route): step 1/1. Specifically catalyzes the NAD or NADP-dependent dehydrogenation of L-aspartate to iminoaspartate. The polypeptide is L-aspartate dehydrogenase (Brucella anthropi (strain ATCC 49188 / DSM 6882 / CCUG 24695 / JCM 21032 / LMG 3331 / NBRC 15819 / NCTC 12168 / Alc 37) (Ochrobactrum anthropi)).